The chain runs to 155 residues: 6,7-dimethyl-8-ribityllumazine synthase (155 aa).

5-amino-6-(D-ribitylamino)uracil contacts are provided by residues F23, 57 to 59 (AFE), and 81 to 83 (AVI). 86 to 87 (ST) serves as a coordination point for (2S)-2-hydroxy-3-oxobutyl phosphate. The active-site Proton donor is the H89. F114 lines the 5-amino-6-(D-ribitylamino)uracil pocket. R128 contacts (2S)-2-hydroxy-3-oxobutyl phosphate.

This sequence belongs to the DMRL synthase family.

It carries out the reaction (2S)-2-hydroxy-3-oxobutyl phosphate + 5-amino-6-(D-ribitylamino)uracil = 6,7-dimethyl-8-(1-D-ribityl)lumazine + phosphate + 2 H2O + H(+). The protein operates within cofactor biosynthesis; riboflavin biosynthesis; riboflavin from 2-hydroxy-3-oxobutyl phosphate and 5-amino-6-(D-ribitylamino)uracil: step 1/2. In terms of biological role, catalyzes the formation of 6,7-dimethyl-8-ribityllumazine by condensation of 5-amino-6-(D-ribitylamino)uracil with 3,4-dihydroxy-2-butanone 4-phosphate. This is the penultimate step in the biosynthesis of riboflavin. The chain is 6,7-dimethyl-8-ribityllumazine synthase from Pelobacter propionicus (strain DSM 2379 / NBRC 103807 / OttBd1).